The primary structure comprises 497 residues: COP9 signalosome complex subunit 3 (497 aa).

The PCI domain maps to 233–408 (QAFDAFERCV…DGSPAYLTFL (176 aa)).

This sequence belongs to the CSN3 family. As to quaternary structure, component of the COP9 signalosome (CSN) complex.

Its subcellular location is the cytoplasm. The protein localises to the nucleus. Its function is as follows. Component of the COP9 signalosome (CSN) complex that acts as an regulator of the ubiquitin (Ubl) conjugation pathway by mediating the deneddylation of the cullin subunit of SCF-type E3 ubiquitin-protein ligase complexes. The CSN complex is involved in the regulation of the circadian clock through its control of the stability of the SCF(FWD1) complex. This Neurospora crassa (strain ATCC 24698 / 74-OR23-1A / CBS 708.71 / DSM 1257 / FGSC 987) protein is COP9 signalosome complex subunit 3 (csn-3).